A 321-amino-acid polypeptide reads, in one-letter code: Glycerol-3-phosphate dehydrogenase [NAD(P)+] (321 aa).

NADPH is bound by residues tryptophan 15, arginine 35, and lysine 101. The sn-glycerol 3-phosphate site is built by lysine 101 and glycine 129. Residue alanine 133 coordinates NADPH. Positions 184, 237, 247, 248, and 249 each coordinate sn-glycerol 3-phosphate. Residue lysine 184 is the Proton acceptor of the active site. Residue arginine 248 coordinates NADPH. The NADPH site is built by valine 268 and glutamate 270.

Belongs to the NAD-dependent glycerol-3-phosphate dehydrogenase family.

Its subcellular location is the cytoplasm. The catalysed reaction is sn-glycerol 3-phosphate + NAD(+) = dihydroxyacetone phosphate + NADH + H(+). It catalyses the reaction sn-glycerol 3-phosphate + NADP(+) = dihydroxyacetone phosphate + NADPH + H(+). Its pathway is membrane lipid metabolism; glycerophospholipid metabolism. Its function is as follows. Catalyzes the reduction of the glycolytic intermediate dihydroxyacetone phosphate (DHAP) to sn-glycerol 3-phosphate (G3P), the key precursor for phospholipid synthesis. In Acidiphilium cryptum (strain JF-5), this protein is Glycerol-3-phosphate dehydrogenase [NAD(P)+].